Here is a 233-residue protein sequence, read N- to C-terminus: RNA-free ribonuclease P (233 aa).

It belongs to the HARP family.

The catalysed reaction is Endonucleolytic cleavage of RNA, removing 5'-extranucleotides from tRNA precursor.. RNA-free RNase P that catalyzes the removal of the 5'-leader sequence from pre-tRNA to produce the mature 5'-terminus. In Methanocaldococcus jannaschii (strain ATCC 43067 / DSM 2661 / JAL-1 / JCM 10045 / NBRC 100440) (Methanococcus jannaschii), this protein is RNA-free ribonuclease P.